A 221-amino-acid polypeptide reads, in one-letter code: PKHD-type hydroxylase PMT9312_1262 (221 aa).

The 95-residue stretch at 80-174 (IIHGIMFTKS…RLVCVGWIES (95 aa)) folds into the Fe2OG dioxygenase domain. Residues His-98, Asp-100, and His-155 each contribute to the Fe cation site. Arg-165 is a 2-oxoglutarate binding site.

Fe(2+) serves as cofactor. It depends on L-ascorbate as a cofactor.

The polypeptide is PKHD-type hydroxylase PMT9312_1262 (Prochlorococcus marinus (strain MIT 9312)).